The primary structure comprises 223 residues: UPF0441 protein YgiB (223 aa).

Residues 178 to 195 (TVPKTAMAPKPATTTTVT) are compositionally biased toward low complexity. The interval 178-223 (TVPKTAMAPKPATTTTVTRGGFGESVAKQSTMQRSATGTSSRSMGG) is disordered. Residues 204–223 (AKQSTMQRSATGTSSRSMGG) show a composition bias toward polar residues.

Belongs to the UPF0441 family.

The chain is UPF0441 protein YgiB from Shigella dysenteriae serotype 1 (strain Sd197).